A 633-amino-acid polypeptide reads, in one-letter code: Threonine--tRNA ligase (633 aa).

The TGS domain maps to 1–61 (MINIYFNNNL…TENCTFEVIT (61 aa)). The catalytic stretch occupies residues 242 to 533 (DHRKIGKELE…LIEHHSGKFP (292 aa)). Positions 333, 384, and 510 each coordinate Zn(2+).

The protein belongs to the class-II aminoacyl-tRNA synthetase family. Homodimer. Zn(2+) serves as cofactor.

It is found in the cytoplasm. The catalysed reaction is tRNA(Thr) + L-threonine + ATP = L-threonyl-tRNA(Thr) + AMP + diphosphate + H(+). Functionally, catalyzes the attachment of threonine to tRNA(Thr) in a two-step reaction: L-threonine is first activated by ATP to form Thr-AMP and then transferred to the acceptor end of tRNA(Thr). Also edits incorrectly charged L-seryl-tRNA(Thr). This chain is Threonine--tRNA ligase, found in Ehrlichia canis (strain Jake).